Consider the following 342-residue polypeptide: Serpentine receptor class delta-33 (342 aa).

Transmembrane regions (helical) follow at residues 26 to 46 (IFVITVTILTSIGFLLNLLLL), 62 to 82 (IFLANTTITQLVYALFAVTSM), 112 to 132 (YVGILHLSLNSFISLMLSMIY), 148 to 168 (IILCIIGYFFPFLIFASCSNI), 205 to 225 (LIILTLAVTCGLVPIYFVMYW), 261 to 281 (IIPLVSVFPASIFWCLSQLGF), and 287 to 307 (YSYFIIPCLSLGCIADPVVTI).

Belongs to the nematode receptor-like protein srd family.

The protein localises to the membrane. The polypeptide is Serpentine receptor class delta-33 (srd-33) (Caenorhabditis elegans).